We begin with the raw amino-acid sequence, 109 residues long: T-cell surface glycoprotein CD1b (109 aa).

The first 18 residues, methionine 1–asparagine 18, serve as a signal peptide directing secretion. N-linked (GlcNAc...) asparagine glycans are attached at residues asparagine 38 and asparagine 75.

As to quaternary structure, heterodimer with B2M (beta-2-microglobulin). Interacts with saposin C. Expressed on cortical thymocytes, on certain T-cell leukemias, and in various other tissues.

It localises to the cell membrane. It is found in the endosome membrane. The protein resides in the lysosome membrane. Functionally, antigen-presenting protein that binds self and non-self lipid and glycolipid antigens and presents them to T-cell receptors on natural killer T-cells. The protein is T-cell surface glycoprotein CD1b (CD1B) of Oryctolagus cuniculus (Rabbit).